The following is a 108-amino-acid chain: LBH domain-containing protein 2 (108 aa).

Residues 1-11 (MSTPRPAPPQP) are compositionally biased toward pro residues. The tract at residues 1–108 (MSTPRPAPPQ…SEDPAAPARG (108 aa)) is disordered. Positions 37–62 (QRLPSIVVEPSEADPVESGELRWPLE) constitute an LBH domain. A compositionally biased stretch (low complexity) spans 63–85 (SAQRGPSQSRAAAAPSPSLPGEP).

This chain is LBH domain-containing protein 2, found in Homo sapiens (Human).